Here is a 106-residue protein sequence, read N- to C-terminus: Iron-sulfur cluster assembly protein CyaY (106 aa).

It belongs to the frataxin family.

In terms of biological role, involved in iron-sulfur (Fe-S) cluster assembly. May act as a regulator of Fe-S biogenesis. The sequence is that of Iron-sulfur cluster assembly protein CyaY from Shigella flexneri serotype 5b (strain 8401).